Here is a 541-residue protein sequence, read N- to C-terminus: Cytochrome P450 monooxygenase claU (541 aa).

A helical transmembrane segment spans residues 12 to 32 (VIDTLVILFSTWAFLGLIRVI). Cys-480 provides a ligand contact to heme.

Belongs to the cytochrome P450 family. It depends on heme as a cofactor.

The protein resides in the membrane. The protein operates within secondary metabolite biosynthesis; terpenoid biosynthesis. In terms of biological role, cytochrome P450 monooxygenase; part of the gene cluster that mediates the biosynthesis of clavilactone A, a meroterpenoid that features a unique benzo-fused ten-membered carbocyclic ring unit with an alpha,beta-epoxy-gamma-lactone moiety, forming an intriguing 10/5/3 tricyclic nested skeleton. Cytochrome P450 monooxygenases claO, claP, claQ, claU, and claW are close orthologs, suggesting that a redundant function or pseudogenes are present in the cla cluster. These monoxygenases are not involved in clavilactone A biosynthesis nor its modification. ClaR, ClaS and ClaT are sufficient to produce clavilactone A. The biosynthesis begins with the prenyltransferase claS that transfers geranyl pyrophosphate (GPP) to hydroquinone to produces geranylhydroquinone. The cytochrome P450 monooxygenase claR then catalyzes the diradical coupling reaction between the intramolecular hydroquinone and allyl moieties to form the benzo-fused ten-membered carbocyclic ring unit of wigantol. Finally the cytochrome P450 monooxygenase claT exquisitely and stereoselectively assembles the alpha,beta-epoxy-gamma-lactone moiety, producing clavilactone A via arnebinol A. This chain is Cytochrome P450 monooxygenase claU, found in Ampulloclitocybe clavipes (Club foot).